Consider the following 194-residue polypeptide: Peptidyl-tRNA hydrolase (194 aa).

TRNA is bound at residue Y16. H21 (proton acceptor) is an active-site residue. Residues Y67, N69, and N115 each coordinate tRNA.

It belongs to the PTH family. As to quaternary structure, monomer.

The protein resides in the cytoplasm. The catalysed reaction is an N-acyl-L-alpha-aminoacyl-tRNA + H2O = an N-acyl-L-amino acid + a tRNA + H(+). Hydrolyzes ribosome-free peptidyl-tRNAs (with 1 or more amino acids incorporated), which drop off the ribosome during protein synthesis, or as a result of ribosome stalling. In terms of biological role, catalyzes the release of premature peptidyl moieties from peptidyl-tRNA molecules trapped in stalled 50S ribosomal subunits, and thus maintains levels of free tRNAs and 50S ribosomes. The chain is Peptidyl-tRNA hydrolase from Synechocystis sp. (strain ATCC 27184 / PCC 6803 / Kazusa).